Here is a 142-residue protein sequence, read N- to C-terminus: Ribonuclease VapC44 (142 aa).

In terms of domain architecture, PINc spans 4–126 (LLDVNVLLAL…GRFVTFDQSI (123 aa)). Residues Asp-6 and Asp-105 each coordinate Mg(2+).

It belongs to the PINc/VapC protein family. Mg(2+) is required as a cofactor.

Toxic component of a type II toxin-antitoxin (TA) system. An RNase. Its cognate antitoxin is VapB44. This Mycobacterium tuberculosis (strain CDC 1551 / Oshkosh) protein is Ribonuclease VapC44.